Reading from the N-terminus, the 251-residue chain is MTQTLSSQDPQAPAAPPMPGAAGSAPADVAHPKGIKSYVRRAGRTTTGQAKALEELGPRYVLDYAPALLDATAAFGRSAPLVLEIGFGMGEATAHIARVRPQDNFLCCEVHEPGVGALLKRIGEQDIHNIRILQHDAVEVLEHMLAPGALDGVHIFFPDPWHKKRHNKRRLIQPPLVAQLAARLKPGGYIHCATDWQPYAEQMLEVLSAEPLLSNTAEGYAPQPDYRPLTKFENRGMRLGHGVWDLVFTRR.

The interval 1–29 (MTQTLSSQDPQAPAAPPMPGAAGSAPADV) is disordered. Glu-84, Glu-109, Asp-136, and Asp-159 together coordinate S-adenosyl-L-methionine. Residue Asp-159 is part of the active site. Lys-163 is a substrate binding site. The segment at 165-170 (RHNKRR) is interaction with RNA. Substrate contacts are provided by residues Asp-195 and 230–233 (TKFE).

The protein belongs to the class I-like SAM-binding methyltransferase superfamily. TrmB family.

The enzyme catalyses guanosine(46) in tRNA + S-adenosyl-L-methionine = N(7)-methylguanosine(46) in tRNA + S-adenosyl-L-homocysteine. The protein operates within tRNA modification; N(7)-methylguanine-tRNA biosynthesis. In terms of biological role, catalyzes the formation of N(7)-methylguanine at position 46 (m7G46) in tRNA. The protein is tRNA (guanine-N(7)-)-methyltransferase of Acidovorax sp. (strain JS42).